The primary structure comprises 57 residues: Small hydrophobic protein (57 aa).

The Virion surface segment spans residues 1–8 (MPLIQPPL). The helical transmembrane segment at 9–29 (YLTFLLLMLLYRIITLYVWSL) threads the bilayer. Over 30–57 (STITYKTSVRHASLYQRSFFRWSVDHSL) the chain is Intravirion.

The protein belongs to the rubulavirus small hydrophobic protein family. In terms of assembly, interacts with host TNFRSF1A, RIPK1 and IRAK1; these interactions interfere with host NF-kappa-B activation at the level of receptor complexes. Interacts with host protein UBQLN4.

It localises to the virion membrane. The protein resides in the host cell membrane. Its function is as follows. Plays a role in the inhibition of the host NF-kappa-B pathway. This inhibition occurs at the receptor level, by preventing the signaling of TNFR1 as well as IL-1R and TLR3. This is Small hydrophobic protein (SH) from Homo sapiens (Human).